A 335-amino-acid chain; its full sequence is Epidermal differentiation-specific protein (335 aa).

Beta/gamma crystallin 'Greek key' domains follow at residues 2–42 (NTIT…KIVG), 43–81 (QPWI…RLIT), 87–126 (PQIT…RVQR), and 127–169 (GAWA…YPLR).

It belongs to the beta/gamma-crystallin family. In terms of tissue distribution, epidermis specific.

This is Epidermal differentiation-specific protein from Cynops pyrrhogaster (Japanese fire-bellied newt).